Here is a 207-residue protein sequence, read N- to C-terminus: 3,4-dihydroxy-2-butanone 4-phosphate synthase (207 aa).

Residues 28-29, D33, 140-144, and E164 contribute to the D-ribulose 5-phosphate site; these read RE and RRGHT. E29 serves as a coordination point for Mg(2+). H143 serves as a coordination point for Mg(2+).

The protein belongs to the DHBP synthase family. In terms of assembly, homodimer. Requires Mg(2+) as cofactor. It depends on Mn(2+) as a cofactor.

It carries out the reaction D-ribulose 5-phosphate = (2S)-2-hydroxy-3-oxobutyl phosphate + formate + H(+). Its pathway is cofactor biosynthesis; riboflavin biosynthesis; 2-hydroxy-3-oxobutyl phosphate from D-ribulose 5-phosphate: step 1/1. Functionally, catalyzes the conversion of D-ribulose 5-phosphate to formate and 3,4-dihydroxy-2-butanone 4-phosphate. The chain is 3,4-dihydroxy-2-butanone 4-phosphate synthase from Oceanobacillus iheyensis (strain DSM 14371 / CIP 107618 / JCM 11309 / KCTC 3954 / HTE831).